We begin with the raw amino-acid sequence, 337 residues long: Protein ABHD13 (337 aa).

A helical; Signal-anchor for type II membrane protein membrane pass occupies residues 37 to 57 (FHLYGGIILLLLIFISIAGIL). Active-site charge relay system residues include Ser-193, Asp-268, and His-298. Asn-299 carries an N-linked (GlcNAc...) asparagine glycan.

Belongs to the serine esterase family.

The protein resides in the membrane. The protein is Protein ABHD13 of Homo sapiens (Human).